Consider the following 384-residue polypeptide: Proteinase K (384 aa).

Residues 1 to 15 (MRLSVLLSLLPLALG) form the signal peptide. The propeptide occupies 16-105 (APAVEQRSEA…IEQDAVVTIN (90 aa)). Residues 39–104 (KYIVKFKEGS…YIEQDAVVTI (66 aa)) enclose the Inhibitor I9 domain. In terms of domain architecture, Peptidase S8 spans 112 to 384 (PWGLARISST…NLLAYNNYQA (273 aa)). A Ca(2+)-binding site is contributed by threonine 121. Cysteine 139 and cysteine 228 are oxidised to a cystine. Residues aspartate 144 and histidine 174 each act as charge relay system in the active site. Proline 280, valine 282, and aspartate 305 together coordinate Ca(2+). Cysteine 283 and cysteine 354 are oxidised to a cystine. The active-site Charge relay system is the serine 329. A Ca(2+)-binding site is contributed by aspartate 365.

The protein belongs to the peptidase S8 family. Ca(2+) serves as cofactor.

It carries out the reaction Hydrolysis of keratin, and of other proteins with subtilisin-like specificity. Hydrolyzes peptide amides.. Its function is as follows. Hydrolyzes keratin at aromatic and hydrophobic residues. This chain is Proteinase K (PROK), found in Parengyodontium album (Tritirachium album).